Here is a 261-residue protein sequence, read N- to C-terminus: Indole-3-glycerol phosphate synthase (261 aa).

It belongs to the TrpC family.

It catalyses the reaction 1-(2-carboxyphenylamino)-1-deoxy-D-ribulose 5-phosphate + H(+) = (1S,2R)-1-C-(indol-3-yl)glycerol 3-phosphate + CO2 + H2O. The protein operates within amino-acid biosynthesis; L-tryptophan biosynthesis; L-tryptophan from chorismate: step 4/5. The sequence is that of Indole-3-glycerol phosphate synthase from Paraburkholderia xenovorans (strain LB400).